Consider the following 170-residue polypeptide: Non-classical export protein 102 (170 aa).

The Cytoplasmic segment spans residues 1–11 (MLAIGDVILRA). One can recognise an MARVEL domain in the interval 6-141 (DVILRAFNFV…TFIFIASAIF (136 aa)). The helical transmembrane segment at 12 to 32 (FNFVFLVIALGLTGSLAATTI) threads the bilayer. Over 33-38 (TQHNPQ) the chain is Extracellular. Residues 39 to 61 (INFAVFAAAFGLLTSSFYGVFAY) form a helical membrane-spanning segment. Topologically, residues 62 to 76 (FVAAFAWPVILFVFD) are cytoplasmic. The helical transmembrane segment at 77 to 97 (FLNFVFTFAAATAIAAGIRAH) threads the bilayer. Residues 98 to 125 (SCSNQDYLDDNNIAQGSSGRCRKAQAST) lie on the Extracellular side of the membrane. The chain crosses the membrane as a helical span at residues 126-146 (AFLYFSTFIFIASAIFSAISL). Residues 147–170 (SKGGLFGHSSRPAPRTGVPTMSQV) are Cytoplasmic-facing.

The protein belongs to the NCE102 family.

It is found in the cell membrane. In terms of biological role, involved in membrane organization. Involved in a novel pathway of export of proteins that lack a cleavable signal sequence. Non-classical export pathway also functions as an alternative clearance/detoxification pathway to eliminate damaged material, when the basic repair pathway is not sufficient. Regulates actin organization and subsequent morphogenesis and pathogenesis. The chain is Non-classical export protein 102 from Candida albicans (strain SC5314 / ATCC MYA-2876) (Yeast).